The primary structure comprises 179 residues: MLSPKRTKFRKQQRGRMRGVATRGNKIAFGQFALQAQECGWITSRQIEASRRAMTRYVKRGGQIWIRIFPDKPVTMRPAETRMGSGKGNPEFWVAVIKPGRILFEMGGEEITESIAREAMRLAQYKLPIKTKFIALAEGETPTQVGKASSASLANLDEDANSQTDDETSSSGSVATVES.

Residues 147-179 (KASSASLANLDEDANSQTDDETSSSGSVATVES) are disordered. The segment covering 156-168 (LDEDANSQTDDET) has biased composition (acidic residues). Residues 169-179 (SSSGSVATVES) are compositionally biased toward polar residues.

The protein belongs to the universal ribosomal protein uL16 family. In terms of assembly, part of the 50S ribosomal subunit.

Functionally, binds 23S rRNA and is also seen to make contacts with the A and possibly P site tRNAs. The sequence is that of Large ribosomal subunit protein uL16 from Prochlorococcus marinus (strain MIT 9211).